We begin with the raw amino-acid sequence, 73 residues long: UPF0499 protein NFIA_054990 (73 aa).

The signal sequence occupies residues 1-20; sequence MKSFNLLSLSLLLAIASAAA. Disulfide bonds link Cys-46/Cys-60, Cys-50/Cys-63, and Cys-56/Cys-70.

This sequence belongs to the UPF0499 family.

It is found in the secreted. The chain is UPF0499 protein NFIA_054990 from Neosartorya fischeri (strain ATCC 1020 / DSM 3700 / CBS 544.65 / FGSC A1164 / JCM 1740 / NRRL 181 / WB 181) (Aspergillus fischerianus).